The chain runs to 159 residues: F1845 fimbrial protein (159 aa).

A signal peptide spans 1–21 (MKKLAIMAAASMIFTVGSAQA).

The protein belongs to the Dr-adhesin family.

It is found in the fimbrium. Its function is as follows. Hemagglutinins of uropathogenic E.coli mediate adherence to the upper urinary tract. These adhesins bind to the Dr blood group antigen and also agglutinate human erythrocytes in the presence of D-mannose (mannose-resistant hemagglutination (MRHA)). C1845 is a strain responsible for diarrheal disease. This chain is F1845 fimbrial protein (daaE), found in Escherichia coli.